We begin with the raw amino-acid sequence, 703 residues long: WD repeat-containing protein pop2 (703 aa).

Composition is skewed to polar residues over residues 1–27 (MSLS…SSSP), 63–73 (ESNSCNGNTSS), and 156–178 (SISS…TVSP). Disordered regions lie at residues 1-73 (MSLS…NTSS) and 156-180 (SISS…SPGS). The segment at 1 to 170 (MSLSRCPTDN…SDNFPPSPKV (170 aa)) is interaction with pop1. An F-box domain is found at 236–283 (KDILSNLPFSIVQSILLNLDIHSFLSCRLVSPTWNRILDVHTSYWKHM). WD repeat units follow at residues 389-417 (GHKE…RVWN), 429-473 (GHIS…RVWK), 505-533 (GHTD…RIWR), 545-575 (GHSL…RVWD), 587-615 (GHDA…RIWD), and 625-654 (LPSN…KLWD).

As to quaternary structure, homodimer and heterodimer with pop1. Binds to cul1, pip1 and phosphorylated cdc18.

It localises to the cytoplasm. The protein localises to the nucleus. Its function is as follows. Involved in maintenance of ploidy through proteasome dependent degradation of CDK inhibitor rum1 and S-phase initiator cdc18. Functions as a recognition factor for rum1 and cdc18, which are subsequently ubiquitinated and targeted to the 26S proteasome for degradation. Together with pop1, required for cig2 instability during G2 and M phase and cig2 degradation in exponentially growing cells. This is WD repeat-containing protein pop2 (pop2) from Schizosaccharomyces pombe (strain 972 / ATCC 24843) (Fission yeast).